A 37-amino-acid polypeptide reads, in one-letter code: SLVCDLECSAEVTTCCETGTCHGITTYNCVGGTEPET.

3 disulfides stabilise this stretch: Cys4-Cys16, Cys8-Cys21, and Cys15-Cys29.

As to expression, expressed by the venom duct.

It is found in the secreted. In terms of biological role, acts as a neurotoxin by inhibiting an ion channel. The sequence is that of Turripeptide Lol6.2 from Iotyrris olangoensis (Sea snail).